A 378-amino-acid polypeptide reads, in one-letter code: Wnt inhibitory factor 1 (378 aa).

The first 28 residues, 1–28 (MAFRTPAVQLHLKACVLLLLGGLLEAAY), serve as a signal peptide directing secretion. One can recognise a WIF domain in the interval 36–175 (MWIDANQARI…PHNAIFFKTC (140 aa)). The N-linked (GlcNAc...) asparagine glycan is linked to asparagine 86. 6 disulfides stabilise this stretch: cysteine 138–cysteine 175, cysteine 180–cysteine 190, cysteine 184–cysteine 196, cysteine 212–cysteine 222, cysteine 216–cysteine 228, and cysteine 230–cysteine 239. 5 EGF-like domains span residues 176-205 (QRAKCPGGCRNGGYCNERQVCECQDGFYGV), 208-240 (EKALCSPRCLNGGLCMSPGVCICPPGYFGSSCE), 243-272 (NCSTTCLNGGTCFHPGKCICAVSFEGVRCE), 272-304 (ELSKCRQPCRNGGKCTGRNKCKCSKGYHGDLCS), and 305-336 (KAVCEPSCGAHGTCVEPNRCQCREGWHGRHCN). N-linked (GlcNAc...) asparagine glycosylation occurs at asparagine 243. 9 disulfide bridges follow: cysteine 244/cysteine 254, cysteine 248/cysteine 260, cysteine 262/cysteine 271, cysteine 276/cysteine 286, cysteine 280/cysteine 292, cysteine 294/cysteine 303, cysteine 308/cysteine 318, cysteine 312/cysteine 324, and cysteine 326/cysteine 335. Positions 343–378 (VSNSQRVSPSKHKSPSVAAAKEAPETSQPSETNYVV) are disordered. The segment covering 367–378 (ETSQPSETNYVV) has biased composition (polar residues).

Highly expressed in unsegmented paraxial mesoderm.

The protein resides in the secreted. Binds to WNT proteins and inhibits their activities. May be involved in mesoderm segmentation. The sequence is that of Wnt inhibitory factor 1 (wif1) from Danio rerio (Zebrafish).